A 215-amino-acid polypeptide reads, in one-letter code: MSKVYDWFEERLEIQAIADDITSKYVPPHVNIFHCLGGITLTCFLVQVATGFAMTFYYRPTVTEAFASVQYIMTEVNFGWLIRSVHRWSASMMVLMMILHVFRVYLTGGFKKPRELTWVTGVVLAVLTASFGVTGYSLPRDQIGYWAVKIVTGVPEAIPIIGSPLVELLRGSASVGQSTLTRFYSLHTFVLPLLTAVFMLMHFPMIRKQGISGPL.

Residues 32-52 (IFHCLGGITLTCFLVQVATGF) form a helical membrane-spanning segment. Residue C35 participates in heme c binding. Positions 86 and 100 each coordinate heme b. The next 3 membrane-spanning stretches (helical) occupy residues 90–110 (ASMMVLMMILHVFRVYLTGGF), 116–136 (LTWVTGVVLAVLTASFGVTGY), and 186–206 (LHTFVLPLLTAVFMLMHFPMI). The heme b site is built by H187 and H202.

The protein belongs to the cytochrome b family. PetB subfamily. As to quaternary structure, the 4 large subunits of the cytochrome b6-f complex are cytochrome b6, subunit IV (17 kDa polypeptide, PetD), cytochrome f and the Rieske protein, while the 4 small subunits are PetG, PetL, PetM and PetN. The complex functions as a dimer. Requires heme b as cofactor. The cofactor is heme c.

The protein resides in the plastid. The protein localises to the chloroplast thylakoid membrane. Functionally, component of the cytochrome b6-f complex, which mediates electron transfer between photosystem II (PSII) and photosystem I (PSI), cyclic electron flow around PSI, and state transitions. This is Cytochrome b6 from Amborella trichopoda.